A 161-amino-acid polypeptide reads, in one-letter code: Myosin regulatory light chain A, smooth adductor muscle (161 aa).

Ala-1 bears the Blocked amino end (Ala) mark. EF-hand domains lie at 20 to 55 (KLMQEMKEAFTMIDQNRDGFIDINDLKEMFSSLGRT) and 89 to 124 (DTEETLRNAFAMFDELDTKKLNIEYIKDLLENMGDN). Positions 33, 35, 37, and 44 each coordinate Ca(2+).

Functionally, in molluscan muscle, calcium regulation is associated with myosin rather than with actin. Muscle myosin contains two types of light chains: the catalytic light chain, essential for ATPase activity, and the regulatory light chain, a calcium-binding protein responsible for Ca(2+) dependent binding and Ca(2+) dependent Mg-ATPase activity. This is Myosin regulatory light chain A, smooth adductor muscle from Mizuhopecten yessoensis (Japanese scallop).